A 426-amino-acid polypeptide reads, in one-letter code: Glucose-6-phosphate isomerase (426 aa).

Residue Glu276 is the Proton donor of the active site. Active-site residues include His297 and Lys413.

The protein belongs to the GPI family.

It is found in the cytoplasm. It carries out the reaction alpha-D-glucose 6-phosphate = beta-D-fructose 6-phosphate. It functions in the pathway carbohydrate biosynthesis; gluconeogenesis. The protein operates within carbohydrate degradation; glycolysis; D-glyceraldehyde 3-phosphate and glycerone phosphate from D-glucose: step 2/4. Its function is as follows. Catalyzes the reversible isomerization of glucose-6-phosphate to fructose-6-phosphate. The polypeptide is Glucose-6-phosphate isomerase (Mesoplasma florum (strain ATCC 33453 / NBRC 100688 / NCTC 11704 / L1) (Acholeplasma florum)).